Consider the following 209-residue polypeptide: Large ribosomal subunit protein uL3 (209 aa).

Belongs to the universal ribosomal protein uL3 family. As to quaternary structure, part of the 50S ribosomal subunit. Forms a cluster with proteins L14 and L19.

In terms of biological role, one of the primary rRNA binding proteins, it binds directly near the 3'-end of the 23S rRNA, where it nucleates assembly of the 50S subunit. The chain is Large ribosomal subunit protein uL3 from Nitratidesulfovibrio vulgaris (strain ATCC 29579 / DSM 644 / CCUG 34227 / NCIMB 8303 / VKM B-1760 / Hildenborough) (Desulfovibrio vulgaris).